Here is a 137-residue protein sequence, read N- to C-terminus: Nucleoside diphosphate kinase (137 aa).

The ATP site is built by lysine 9, phenylalanine 57, arginine 85, threonine 91, arginine 102, and asparagine 112. The Pros-phosphohistidine intermediate role is filled by histidine 115.

The protein belongs to the NDK family. Homotetramer. Mg(2+) is required as a cofactor.

The protein resides in the cytoplasm. The catalysed reaction is a 2'-deoxyribonucleoside 5'-diphosphate + ATP = a 2'-deoxyribonucleoside 5'-triphosphate + ADP. It catalyses the reaction a ribonucleoside 5'-diphosphate + ATP = a ribonucleoside 5'-triphosphate + ADP. In terms of biological role, major role in the synthesis of nucleoside triphosphates other than ATP. The ATP gamma phosphate is transferred to the NDP beta phosphate via a ping-pong mechanism, using a phosphorylated active-site intermediate. This chain is Nucleoside diphosphate kinase, found in Campylobacter hominis (strain ATCC BAA-381 / DSM 21671 / CCUG 45161 / LMG 19568 / NCTC 13146 / CH001A).